The following is a 296-amino-acid chain: Probable transcription factor At1g44810 (296 aa).

A disordered region spans residues 1-119 (MNKKLLNPLE…AKKVSGDDDN (119 aa)). Acidic residues predominate over residues 19 to 28 (EDVDEEISSG). Over residues 52–72 (TQTLNSPSTEAPTLDSGSETN) the composition is skewed to polar residues. Over residues 97 to 119 (RASEGTSSKDIKRAKKVSGDDDN) the composition is skewed to basic and acidic residues.

It belongs to the GeBP family.

This Arabidopsis thaliana (Mouse-ear cress) protein is Probable transcription factor At1g44810.